A 253-amino-acid polypeptide reads, in one-letter code: Proteasome subunit alpha type-3 (253 aa).

The segment at 230–253 is disordered; it reads ELTEKARKAGDAANKDEDSDNETH. Over residues 231 to 253 the composition is skewed to basic and acidic residues; sequence LTEKARKAGDAANKDEDSDNETH. Position 248 is a phosphoserine (Ser-248).

It belongs to the peptidase T1A family. As to quaternary structure, the 26S proteasome consists of a 20S proteasome core and two 19S regulatory subunits. The 20S proteasome core is composed of 28 subunits that are arranged in four stacked rings, resulting in a barrel-shaped structure. The two end rings are each formed by seven alpha subunits, and the two central rings are each formed by seven beta subunits. The catalytic chamber with the active sites is on the inside of the barrel. Interacts with ntc.

Its subcellular location is the cytoplasm. The protein resides in the nucleus. Its function is as follows. The proteasome is a multicatalytic proteinase complex which is characterized by its ability to cleave peptides with Arg, Phe, Tyr, Leu, and Glu adjacent to the leaving group at neutral or slightly basic pH. The proteasome has an ATP-dependent proteolytic activity. The chain is Proteasome subunit alpha type-3 (Prosalpha7) from Drosophila melanogaster (Fruit fly).